Reading from the N-terminus, the 251-residue chain is Probable transcriptional regulatory protein Blon_1155/BLIJ_1182 (251 aa).

This sequence belongs to the TACO1 family.

It localises to the cytoplasm. The protein is Probable transcriptional regulatory protein Blon_1155/BLIJ_1182 of Bifidobacterium longum subsp. infantis (strain ATCC 15697 / DSM 20088 / JCM 1222 / NCTC 11817 / S12).